The primary structure comprises 288 residues: 4-diphosphocytidyl-2-C-methyl-D-erythritol kinase (288 aa).

Lys11 is an active-site residue. 100–110 (PIAAGLGSGSS) contacts ATP. Residue Asp140 is part of the active site.

The protein belongs to the GHMP kinase family. IspE subfamily.

The enzyme catalyses 4-CDP-2-C-methyl-D-erythritol + ATP = 4-CDP-2-C-methyl-D-erythritol 2-phosphate + ADP + H(+). Its pathway is isoprenoid biosynthesis; isopentenyl diphosphate biosynthesis via DXP pathway; isopentenyl diphosphate from 1-deoxy-D-xylulose 5-phosphate: step 3/6. Functionally, catalyzes the phosphorylation of the position 2 hydroxy group of 4-diphosphocytidyl-2C-methyl-D-erythritol. In Wolbachia sp. subsp. Drosophila simulans (strain wRi), this protein is 4-diphosphocytidyl-2-C-methyl-D-erythritol kinase.